We begin with the raw amino-acid sequence, 84 residues long: Neurotoxin BM10-1-like (84 aa).

A signal peptide spans 1–21; sequence MKTLLLTLVVVTIVCLDLGYT. Disulfide bonds link Cys24–Cys47, Cys27–Cys32, Cys40–Cys64, Cys68–Cys76, and Cys77–Cys82.

The protein belongs to the three-finger toxin family. Ancestral subfamily. Orphan group IV sub-subfamily. As to expression, expressed by the venom gland.

The protein resides in the secreted. In terms of biological role, binds and inhibits muscular and neuronal nicotinic acetylcholine receptors (nAChR). The chain is Neurotoxin BM10-1-like from Bungarus multicinctus (Many-banded krait).